A 304-amino-acid polypeptide reads, in one-letter code: Thyroxine 5-deiodinase (304 aa).

The interval 1-22 (MPRQAASRLVVGEGEGPPGASG) is disordered. Over 1-42 (MPRQAASRLVVGEGEGPPGASGPAATMLRSLLLHSLRLCAQT) the chain is Cytoplasmic. The chain crosses the membrane as a helical; Signal-anchor for type II membrane protein span at residues 43 to 62 (ASCLVLFPRFLGTAFMLWLL). The Extracellular segment spans residues 63 to 304 (DFLCIRKHFL…QLHGTRPRRL (242 aa)). Sec170 is a catalytic residue. A non-standard amino acid (selenocysteine) is located at residue Sec170.

Belongs to the iodothyronine deiodinase family. As to quaternary structure, monomer. Homodimer. May undergo minor heretodimerization with DIO1 and DIO2. In terms of tissue distribution, neonatal skin, placenta, skeletal muscle and cerebral cortex.

The protein resides in the cell membrane. The protein localises to the endosome membrane. The catalysed reaction is 3,3',5'-triiodo-L-thyronine + iodide + A + H(+) = L-thyroxine + AH2. The enzyme catalyses 3,3'-diiodo-L-thyronine + iodide + A + H(+) = 3,3',5-triiodo-L-thyronine + AH2. It catalyses the reaction 3-iodo-L-thyronine + iodide + A + H(+) = 3,5-diiodo-L-thyronine + AH2. It carries out the reaction L-thyronine + iodide + A + H(+) = 3-iodo-L-thyronine + AH2. The catalysed reaction is 3',5'-diiodo-L-thyronine + iodide + A + H(+) = 3,3',5'-triiodo-L-thyronine + AH2. The enzyme catalyses 3'-iodo-L-thyronine + iodide + A + H(+) = 3,3'-diiodo-L-thyronine + AH2. It catalyses the reaction 3,3',5'-triiodothyronamine + iodide + A + H(+) = 3,3',5,5'-tetraiodothyronamine + AH2. It carries out the reaction 3',5'-diiodothyronamine + iodide + A + H(+) = 3,3',5'-triiodothyronamine + AH2. The catalysed reaction is 3,3'-diiodothyronamine + iodide + A + H(+) = 3,3',5-triiodothyronamine + AH2. The enzyme catalyses 3-iodothyronamine + iodide + A + H(+) = 3,5-diiodothyronamine + AH2. It catalyses the reaction 3'-iodothyronamine + iodide + A + H(+) = 3,3'-diiodothyronamine + AH2. It carries out the reaction thyronamine + iodide + A + H(+) = 3-iodothyronamine + AH2. Plays a crucial role in the metabolism of thyroid hormones (TH) and has specific roles in TH activation and inactivation by deiodination. Catalyzes the deiodination of L-thyroxine (T4) to 3,3',5'-triiodothyronine (rT3), 3,5-diiodothyronine (3,5-T2) to 3-monoiodothyronine (3-T1), rT3 to 3',5'-diiodothyronine (3',5'-T2) and 3,3'-diiodothyronine (3,3'-T2) to 3'-monoiodothyronine (3'-T1) via inner-ring deiodination (IRD). Catalyzes the deiodination of 3,5,3'-triiodothyronine (T3) to 3,3'-diiodothyronine (3,3'-T2) via IRD. Catalyzes the deiodination of 3-T1 to L-thyronine (T0) via outer-ring deiodination (ORD). Catalyzes the tyrosyl ring deiodinations of T4AM (3,3',5,5'-tetraiodothyronamine), rT3AM (3,3',5'-triiodothyronamine), T3AM (3,5,3'-triiodothyronamine), 3,5-T2AM (3,5-diiodothyronamine), 3,3'-T2AM (3,3'-diiodothyronamine) and 3-T1AM (3-iodothyronamine). The chain is Thyroxine 5-deiodinase (Dio3) from Rattus norvegicus (Rat).